The chain runs to 655 residues: p-hydroxybenzoic acid efflux pump subunit AaeB (655 aa).

11 consecutive transmembrane segments (helical) span residues 13–33 (FAVK…HFQL), 38–58 (WAVL…GGEP), 69–89 (LRII…IAMI), 93–113 (LLMI…SSLV), 121–141 (WGLA…EPLL), 152–172 (EIVI…PRSI), 370–390 (LFWL…IAVV), 407–427 (FIYG…VIIP), 431–451 (QSML…GIEV), 459–479 (MGAL…TFHF), and 482–502 (FLDS…VILL).

It belongs to the aromatic acid exporter ArAE (TC 2.A.85) family.

The protein resides in the cell inner membrane. Its function is as follows. Forms an efflux pump with AaeA. Could function as a metabolic relief valve, allowing to eliminate certain compounds when they accumulate to high levels in the cell. The polypeptide is p-hydroxybenzoic acid efflux pump subunit AaeB (Escherichia coli O6:K15:H31 (strain 536 / UPEC)).